A 361-amino-acid chain; its full sequence is Terpene synthase 6 (361 aa).

Positions 81–86 match the DDxx(x)D/E motif motif; sequence DDVLDA. Positions 223–231 match the NDxxSxxxD/E motif motif; sequence NDLVSYEKE.

It belongs to the terpene synthase family.

The enzyme catalyses (2E,6E)-farnesyl diphosphate = (2S,3R,6S,9S)-(-)-protoillud-7-ene + diphosphate. In terms of biological role, terpene synthase that converts its substrate farnesyl diphosphate (FPP) into the sesquiterpene (2S,3R,6S,9S)-(-)-protoillud-7-ene. The polypeptide is Terpene synthase 6 (Dictyostelium discoideum (Social amoeba)).